The following is a 324-amino-acid chain: Interactor of constitutive active ROPs 4 (324 aa).

Disordered stretches follow at residues 1–74 (MPKP…SGLE), 91–156 (LAKA…ASKE), 175–201 (SLSEENETLKDQLKKTDTEMSCAKAKE), and 289–324 (FVGSPGMADDSDDGSGKRKSSGKKMFGDLWKKKGQK). Over residues 13–28 (QRQSPRLRTSLLSTSS) the composition is skewed to low complexity. 3 stretches are compositionally biased toward basic and acidic residues: residues 29 to 50 (DPHHLSRPITDRSPKLGLDRRS), 95 to 106 (EAAKKRAQEELH), and 118 to 156 (PERDDIPGDGHQETDVFEVLDEKAKESEKTKNDELASKE). The stretch at 62 to 266 (SQKKLGSRIS…ADAAAAVLSG (205 aa)) forms a coiled coil. Basic and acidic residues predominate over residues 313-324 (MFGDLWKKKGQK).

The protein belongs to the ICR family. In terms of assembly, interacts with ARAC11 in vitro.

In terms of biological role, acts as a scaffold, mediating interaction of ROPs with different proteins. The sequence is that of Interactor of constitutive active ROPs 4 (ICR4) from Arabidopsis thaliana (Mouse-ear cress).